Reading from the N-terminus, the 292-residue chain is Coatomer subunit epsilon-1 (292 aa).

It belongs to the COPE family. Oligomeric complex that consists of at least the alpha, beta, beta', gamma, delta, epsilon and zeta subunits.

The protein localises to the cytoplasm. It localises to the golgi apparatus membrane. It is found in the cytoplasmic vesicle. Its subcellular location is the COPI-coated vesicle membrane. Functionally, the coatomer is a cytosolic protein complex that binds to dilysine motifs and reversibly associates with Golgi non-clathrin-coated vesicles, which further mediate biosynthetic protein transport from the ER, via the Golgi up to the trans Golgi network. The coatomer complex is required for budding from Golgi membranes, and is essential for the retrograde Golgi-to-ER transport of dilysine-tagged proteins. The chain is Coatomer subunit epsilon-1 from Arabidopsis thaliana (Mouse-ear cress).